The primary structure comprises 293 residues: Bifunctional protein FolD (293 aa).

NADP(+) contacts are provided by residues 165 to 167 (GRS), threonine 194, and valine 235.

This sequence belongs to the tetrahydrofolate dehydrogenase/cyclohydrolase family. Homodimer.

It carries out the reaction (6R)-5,10-methylene-5,6,7,8-tetrahydrofolate + NADP(+) = (6R)-5,10-methenyltetrahydrofolate + NADPH. It catalyses the reaction (6R)-5,10-methenyltetrahydrofolate + H2O = (6R)-10-formyltetrahydrofolate + H(+). It functions in the pathway one-carbon metabolism; tetrahydrofolate interconversion. Functionally, catalyzes the oxidation of 5,10-methylenetetrahydrofolate to 5,10-methenyltetrahydrofolate and then the hydrolysis of 5,10-methenyltetrahydrofolate to 10-formyltetrahydrofolate. The sequence is that of Bifunctional protein FolD from Syntrophus aciditrophicus (strain SB).